We begin with the raw amino-acid sequence, 376 residues long: Ribonucleoside-diphosphate reductase subunit beta (376 aa).

Fe cation-binding residues include D85, E116, and H119. The active site involves Y123. The Fe cation site is built by E205, E239, and H242.

It belongs to the ribonucleoside diphosphate reductase small chain family. In terms of assembly, tetramer of two alpha and two beta subunits. Requires Fe cation as cofactor.

The catalysed reaction is a 2'-deoxyribonucleoside 5'-diphosphate + [thioredoxin]-disulfide + H2O = a ribonucleoside 5'-diphosphate + [thioredoxin]-dithiol. Functionally, provides the precursors necessary for DNA synthesis. Catalyzes the biosynthesis of deoxyribonucleotides from the corresponding ribonucleotides. This is Ribonucleoside-diphosphate reductase subunit beta (nrdB) from Haemophilus influenzae (strain ATCC 51907 / DSM 11121 / KW20 / Rd).